Reading from the N-terminus, the 111-residue chain is Tubulin beta chain (111 aa).

The disordered stretch occupies residues 82–111; that stretch reads SEYQQYQDATAEDEGEFDEEEAEGEGQEYA. Residues 91–111 are compositionally biased toward acidic residues; the sequence is TAEDEGEFDEEEAEGEGQEYA.

The protein belongs to the tubulin family. Dimer of alpha and beta chains. A typical microtubule is a hollow water-filled tube with an outer diameter of 25 nm and an inner diameter of 15 nM. Alpha-beta heterodimers associate head-to-tail to form protofilaments running lengthwise along the microtubule wall with the beta-tubulin subunit facing the microtubule plus end conferring a structural polarity. Microtubules usually have 13 protofilaments but different protofilament numbers can be found in some organisms and specialized cells. It depends on Mg(2+) as a cofactor.

Its subcellular location is the cytoplasm. The protein resides in the cytoskeleton. Functionally, tubulin is the major constituent of microtubules, a cylinder consisting of laterally associated linear protofilaments composed of alpha- and beta-tubulin heterodimers. Microtubules grow by the addition of GTP-tubulin dimers to the microtubule end, where a stabilizing cap forms. Below the cap, tubulin dimers are in GDP-bound state, owing to GTPase activity of alpha-tubulin. This is Tubulin beta chain from Lymnaea stagnalis (Great pond snail).